A 120-amino-acid chain; its full sequence is UPF0102 protein Moth_0988 (120 aa).

It belongs to the UPF0102 family.

This chain is UPF0102 protein Moth_0988, found in Moorella thermoacetica (strain ATCC 39073 / JCM 9320).